The chain runs to 697 residues: Zinc finger and BTB domain-containing protein 24 (697 aa).

Positions 10 to 133 (GQLVVHSDAH…AYTDFQNNHS (124 aa)) constitute a BTB domain. Positions 131 to 142 (NHSSPKPTTLNT) are enriched in polar residues. Disordered regions lie at residues 131 to 176 (NHSS…EEKS) and 209 to 254 (EQIA…SRYS). Positions 159–171 (KRKRGRPKKVNTL) form a DNA-binding region, a.T hook. Residues 212–245 (AAKEKEESEPTCEPSREEEMPVEKDENYDPKTED) are compositionally biased toward basic and acidic residues. 8 C2H2-type zinc fingers span residues 294–316 (ARCKDCGKVFKYNHFLAIHQRSH), 322–344 (FKCNECGKGFAQKHSLQVHTRMH), 350–372 (YTCTVCSKALTTKHSLLEHMSLH), 378–400 (FTCDQCGKYFSQNRQLKSHYRVH), 406–428 (PECKDCHRKFMDVSQLKKHLRTH), 434–456 (FTCEICGKSFTAKSSLQTHIRIH), 462–484 (YSCGICGKSFSDSSAKRRHCILH), and 490–512 (FSCPECNLQFARLDNLKAHLKIH). Residues 652–697 (QEQTEELHLATSTSDPAQHLQLTQEPGPPPPTHHVPQPTPLGQEQS) form a disordered region. Pro residues predominate over residues 677 to 690 (PGPPPPTHHVPQPT).

The protein belongs to the krueppel C2H2-type zinc-finger protein family. As to quaternary structure, interacts with MN1. Widely expressed, with highest levels in naive B-cells.

It is found in the nucleus. Its function is as follows. May be involved in BMP2-induced transcription. The chain is Zinc finger and BTB domain-containing protein 24 (ZBTB24) from Homo sapiens (Human).